We begin with the raw amino-acid sequence, 507 residues long: MSGTSPPTPKDHITMVDHDYSDCSEDVSLIGADREHRRSSTPDGLYQHKINRHYNPLYIAVVASLTFLITDIAGQIIVAPRLAIFEHIICKAYYTQVSGAAGTGMGDCKVEPVQSELALINGWREMFDNIPGTSYTLDRFGRKKVLLIAMVGCLLSDIWVGVVTWFPDTFPLRAVWFSGIWQLIGGGGASISSMAFAMIADSCPADLRTTAFSQVHAAVLVAELVSVPAGAALANFNPWIPVFGAAIFMVLGILFAYVVVPDVRPAGSKREGGSDGDFLSSAQESHPTWLMSIHHRWRKIVDEFRKDSSWIRDVNVLLIMASFFVCQLGRMISGITLQYAAAKFHWKFDKASLLVSLRAGVNLFVLAAIIPALSYILVKRFKLNDVVKDKRITQINGVCLIIGSFVMFLAASPGTLVFGQTVFALGFAFSVTARSFLTGMVDPMHIGTVFTGVTTMLYGGLVIGSPMLAKTLQWGLQLGGIWVGLPFLLAAVLFTLALGAISAARSY.

A run of 11 helical transmembrane segments spans residues 59–79 (IAVV…IIVA), 146–166 (LLIA…VTWF), 180–200 (IWQL…AMIA), 216–236 (HAAV…LANF), 240–260 (IPVF…YVVV), 316–336 (VLLI…SGIT), 359–379 (AGVN…ILVK), 398–418 (VCLI…TLVF), 421–441 (TVFA…TGMV), 449–469 (VFTG…PMLA), and 481–501 (IWVG…LGAI).

The protein belongs to the major facilitator superfamily.

Its subcellular location is the cell membrane. The protein operates within mycotoxin biosynthesis. Efflux pump; part of the gene cluster that mediates the biosynthesis of the secondary metabolite ustiloxin B, an antimitotic tetrapeptide. Probably involved in self-resistance through the export of ustiloxin B. This chain is Efflux pump ustT, found in Aspergillus flavus (strain ATCC 200026 / FGSC A1120 / IAM 13836 / NRRL 3357 / JCM 12722 / SRRC 167).